The sequence spans 214 residues: ATP synthase subunit 5, mitochondrial (214 aa).

The transit peptide at 1–24 (MFASRAIRMMSMRPMARTMATKAA) directs the protein to the mitochondrion.

As to quaternary structure, F-type ATP synthases have 2 components, the catalytic core F(1) and the membrane-embedded component F(0), linked together by a central stalk and a peripheral stalk. The central stalk, also called rotor shaft, is often seen as part of F(1). The peripheral stalk is seen as part of F(0). F(0) contains the membrane channel next to the rotor. F-type ATP synthases form dimers but each monomer functions independently in ATP generation. The dimer consists of 17 different polypeptides: ATP1 (subunit alpha, 3 molecules per monomer, part of F(1)), ATP2 (subunit beta, 3 copies per monomer, part of F(1)), ATP3 (subunit gamma, part of the central stalk), ATP4 (subunit b, part of the peripheral stalk), ATP5/OSCP (subunit 5/OSCP, part of the peripheral stalk), ATP6 (subunit a, part of the peripheral stalk), ATP7 (subunit d, part of the peripheral stalk), ATP8 (subunit 8, part of the peripheral stalk), OLI1 (subunit c, part of the rotor, 10 molecules per monomer), ATP14 (subunit h, part of the peripheral stalk), ATP15 (subunit epsilon, part of the central stalk), ATP16 (subunit delta, part of the central stalk), ATP17 (subunit f, part of the peripheral stalk), ATP18 (subunit i/j, part of the peripheral stalk), ATP19 (subunit k, dimer-specific, at interface between monomers), ATP20 (subunit g, at interface between monomers), TIM11 (subunit e, at interface between monomers).

It localises to the mitochondrion inner membrane. Its function is as follows. Mitochondrial membrane ATP synthase (F(1)F(0) ATP synthase or Complex V) produces ATP from ADP in the presence of a proton gradient across the membrane which is generated by electron transport complexes of the respiratory chain. F-type ATP synthases consist of two structural domains, F(1) - containing the extramembraneous catalytic core, and F(0) - containing the membrane proton channel, linked together by a central stalk and a peripheral stalk. During catalysis, ATP synthesis in the catalytic domain of F(1) is coupled via a rotary mechanism of the central stalk subunits to proton translocation. Part of the complex F(0) domain and the peripheral stalk, which acts as a stator to hold the catalytic alpha/ATP1(3)beta/ATP2(3) subcomplex and subunit a/ATP6 static relative to the rotary elements. This chain is ATP synthase subunit 5, mitochondrial, found in Yarrowia lipolytica (strain CLIB 122 / E 150) (Yeast).